The following is a 144-amino-acid chain: Interleukin-3 (144 aa).

A signal peptide spans 1-17 (MSSLSILHLLLLLLALH).

This sequence belongs to the IL-3 family. In terms of assembly, monomer.

It is found in the secreted. Its function is as follows. Granulocyte/macrophage colony-stimulating factors are cytokines that act in hematopoiesis by controlling the production, differentiation, and function of 2 related white cell populations of the blood, the granulocytes and the monocytes-macrophages. This CSF induces granulocytes, macrophages, mast cells, stem cells, erythroid cells, eosinophils and megakaryocytes. This Bos taurus (Bovine) protein is Interleukin-3 (IL3).